The sequence spans 181 residues: Oligoribonuclease (181 aa).

Residues 8 to 171 (LIWLDLEMTG…DDIKDSIMEL (164 aa)) enclose the Exonuclease domain. Residue Y129 is part of the active site.

This sequence belongs to the oligoribonuclease family.

It localises to the cytoplasm. Functionally, 3'-to-5' exoribonuclease specific for small oligoribonucleotides. The polypeptide is Oligoribonuclease (Pseudoalteromonas translucida (strain TAC 125)).